The sequence spans 1396 residues: DNA-directed RNA polymerase subunit beta' (1396 aa).

Zn(2+) is bound by residues C70, C72, C85, and C88. 3 residues coordinate Mg(2+): D460, D462, and D464. The Zn(2+) site is built by C807, C881, C888, and C891. Over residues 1361–1378 the composition is skewed to acidic residues; it reads EPEEIEEPVPEDLEDETA. The interval 1361 to 1396 is disordered; it reads EPEEIEEPVPEDLEDETAGADSAQAASEESVAEGKD. Low complexity predominate over residues 1379–1389; that stretch reads GADSAQAASEE.

The protein belongs to the RNA polymerase beta' chain family. In terms of assembly, the RNAP catalytic core consists of 2 alpha, 1 beta, 1 beta' and 1 omega subunit. When a sigma factor is associated with the core the holoenzyme is formed, which can initiate transcription. It depends on Mg(2+) as a cofactor. Zn(2+) is required as a cofactor.

The catalysed reaction is RNA(n) + a ribonucleoside 5'-triphosphate = RNA(n+1) + diphosphate. Functionally, DNA-dependent RNA polymerase catalyzes the transcription of DNA into RNA using the four ribonucleoside triphosphates as substrates. The sequence is that of DNA-directed RNA polymerase subunit beta' from Syntrophotalea carbinolica (strain DSM 2380 / NBRC 103641 / GraBd1) (Pelobacter carbinolicus).